We begin with the raw amino-acid sequence, 942 residues long: Alpha,alpha-trehalose-phosphate synthase [UDP-forming] 1 (942 aa).

Residues 28 to 57 (REKRKSNRARNPNDVAGSSENSENDLRLEG) are disordered. A glycosyltransferase region spans residues 92 to 559 (QRLLVVANRL…AETFVSELND (468 aa)). The segment at 815–892 (DMPAIARSRP…LGNSRRPSPE (78 aa)) is disordered. Composition is skewed to low complexity over residues 821–833 (RSRP…AKSS) and 841–867 (SKST…NKSS). Residues 879–888 (SNHSLGNSRR) show a composition bias toward polar residues.

This sequence in the N-terminal section; belongs to the glycosyltransferase 20 family. In the C-terminal section; belongs to the trehalose phosphatase family. As to expression, expressed in seedlings, leaves, roots, stems, flowers and siliques.

Its subcellular location is the vacuole. It localises to the secreted. The protein localises to the cell wall. The protein resides in the cytoplasm. The catalysed reaction is D-glucose 6-phosphate + UDP-alpha-D-glucose = alpha,alpha-trehalose 6-phosphate + UDP + H(+). In terms of biological role, required for normal embryo development, vegetative growth and transition to flowering. Regulates embryo growth, cell wall deposition, starch and sucrose degradation, but not cell differentiation. Involved in the regulation of glucose sensing and signaling genes during plant development. This is Alpha,alpha-trehalose-phosphate synthase [UDP-forming] 1 from Arabidopsis thaliana (Mouse-ear cress).